The primary structure comprises 427 residues: Extracellular superoxide dismutase [Cu-Zn] 2 (427 aa).

Positions 1–20 (MNKLIISLLIVLSAISIISA) are cleaved as a signal peptide. Residues 21–406 (DYQYGYCKFG…PTETSQPGTS (386 aa)) are Extracellular-facing. Residues N38, N57, N81, N190, and N218 are each glycosylated (N-linked (GlcNAc...) asparagine). Positions 257, 259, and 275 each coordinate Cu cation. The Zn(2+) site is built by H275 and H283. N-linked (GlcNAc...) asparagine glycosylation is present at N288. Residues H292 and D295 each contribute to the Zn(2+) site. H331 lines the Cu cation pocket. N376 carries an N-linked (GlcNAc...) asparagine glycan. The segment at 381–404 (GESTIEPSPTPSTTPTPTETSQPG) is disordered. Residues 395–404 (PTPTETSQPG) are compositionally biased toward low complexity. A helical transmembrane segment spans residues 407–426 (SYLAPFFVLILSSLISVILI). A topological domain (cytoplasmic) is located at residue L427.

It belongs to the Cu-Zn superoxide dismutase family. Cu cation is required as a cofactor. Zn(2+) serves as cofactor.

The protein localises to the cell membrane. The enzyme catalyses 2 superoxide + 2 H(+) = H2O2 + O2. Functionally, protect the extracellular space from toxic effect of reactive oxygen intermediates by converting superoxyde radicals into hydrogen peroxyde and oxygen. The chain is Extracellular superoxide dismutase [Cu-Zn] 2 (sodB) from Dictyostelium discoideum (Social amoeba).